Reading from the N-terminus, the 279-residue chain is MDTELLKTFLEVSRTRHFGRAAESLYLTQSAVSFRIRQLENQLGVNLFTRHRNNIRLTAAGEKLLPYAETLMSTWQAARKEVAHTSRHNEFSIGASASLWECMLNQWLGRLYQNQDAHTGLQFEARIAQRQSLVKQLHERQLDLLITTEAPKMDEFSSQLLGYFTLALYTSAPSKLKGDLNYLRLEWGPDFQQHEAGLIGADEVPILTTSSAELAQQQIAMLNGCTWLPVSWARKKGGLHTVVDSTTLSRPLYAIWLQNSDKNTLIRDLLKINVLDEVY.

Positions 1–58 (MDTELLKTFLEVSRTRHFGRAAESLYLTQSAVSFRIRQLENQLGVNLFTRHRNNIRLT) constitute an HTH lysR-type domain. Positions 18–37 (FGRAAESLYLTQSAVSFRIR) form a DNA-binding region, H-T-H motif.

It belongs to the LysR transcriptional regulatory family.

Negatively regulates the transcription of the flagellar master operon flhDC by binding to the upstream region of the operon. In Escherichia coli (strain SE11), this protein is HTH-type transcriptional regulator HdfR.